Reading from the N-terminus, the 332-residue chain is Mediator of RNA polymerase II transcription subunit 3 (332 aa).

Disordered regions lie at residues 125-206 (EPVR…PGAT) and 221-242 (SPLNGISPSRKPAQPHHQTTPS). Low complexity predominate over residues 132–143 (SPSYRRPSNRSS). Polar residues predominate over residues 144-153 (ADTPSSNAPT). Low complexity-rich tracts occupy residues 155–166 (SAAVVSGAALVA) and 184–200 (PSVSASVVPSANSSGPA).

Belongs to the Mediator complex subunit 3 family. As to quaternary structure, component of the Mediator complex.

It localises to the nucleus. Functionally, component of the Mediator complex, a coactivator involved in regulated gene transcription of nearly all RNA polymerase II-dependent genes. Mediator functions as a bridge to convey information from gene-specific regulatory proteins to the basal RNA polymerase II transcription machinery. Mediator is recruited to promoters by direct interactions with regulatory proteins and serves as a scaffold for the assembly of a functional preinitiation complex with RNA polymerase II and the general transcription factors. The sequence is that of Mediator of RNA polymerase II transcription subunit 3 (PGD1) from Eremothecium gossypii (strain ATCC 10895 / CBS 109.51 / FGSC 9923 / NRRL Y-1056) (Yeast).